Reading from the N-terminus, the 581-residue chain is Interleukin-22 receptor subunit alpha-1 (581 aa).

A signal peptide spans 1-15; that stretch reads MKTLLTILTVGSLAA. The Extracellular segment spans residues 16 to 230; that stretch reads HTTVDTSGLL…TLPDRTWAYS (215 aa). Fibronectin type-III domains lie at 18–115 and 141–221; these read TVDT…RFSS and PTLT…RVKT. A disulfide bond links cysteine 71 and cysteine 79. N-linked (GlcNAc...) asparagine glycosylation is found at asparagine 80 and asparagine 172. A disulfide bridge connects residues cysteine 128 and cysteine 217. Residues 231–251 form a helical membrane-spanning segment; the sequence is FSGAVLFSMGFLVGLLCYLGY. At 252–581 the chain is on the cytoplasmic side; the sequence is KYITKPPVPP…GLALTVQWES (330 aa). The tract at residues 343-364 is disordered; that stretch reads QQTLSPPSYAPKAVPEVQPPSY. Residues serine 410 and serine 414 each carry the phosphoserine; by GSK3-beta modification. A Glycyl lysine isopeptide (Lys-Gly) (interchain with G-Cter in ubiquitin) cross-link involves residue lysine 449.

The protein belongs to the type II cytokine receptor family. As to quaternary structure, heterodimer with IL10RB and with IL20RB. Phosphorylated by GSK3-BETA and MAPK; phosphorylation by GSK3-BETA stabilizes IL22RA1 by preventing its proteasomal degradation. Expressed in kidney, liver and lung.

It is found in the cell membrane. Its function is as follows. Component of the receptor for IL20, IL22 and IL24. Component of IL22 receptor formed by IL22RA1 and IL10RB enabling IL22 signaling via JAK/STAT pathways. IL22 also induces activation of MAPK1/MAPK3 and Akt kinases pathways. Component of one of the receptor for IL20 and IL24 formed by IL22RA1 and IL20RB also signaling through STATs activation. Mediates IL24 antiangiogenic activity as well as IL24 inhibitory effect on endothelial cell tube formation and differentiation. This chain is Interleukin-22 receptor subunit alpha-1 (Il22ra1), found in Mus musculus (Mouse).